Here is a 372-residue protein sequence, read N- to C-terminus: 3 beta-hydroxysteroid dehydrogenase/Delta 5--&gt;4-isomerase type 2 (372 aa).

The active-site Proton acceptor is Tyr-154. Lys-158 provides a ligand contact to NAD(+). The helical transmembrane segment at 287 to 307 (LTLMYWIGFLLEVVSFLLSPI) threads the bilayer.

Belongs to the 3-beta-HSD family. In terms of tissue distribution, expressed in adrenal gland, testis and ovary.

Its subcellular location is the endoplasmic reticulum membrane. It localises to the mitochondrion membrane. The enzyme catalyses a 3beta-hydroxy-Delta(5)-steroid + NAD(+) = a 3-oxo-Delta(5)-steroid + NADH + H(+). The catalysed reaction is a 3-oxo-Delta(5)-steroid = a 3-oxo-Delta(4)-steroid. It carries out the reaction pregnenolone + NAD(+) = pregn-5-ene-3,20-dione + NADH + H(+). It catalyses the reaction pregn-5-ene-3,20-dione = progesterone. The enzyme catalyses 3beta-hydroxyandrost-5-en-17-one + NAD(+) = androst-5-ene-3,17-dione + NADH + H(+). The catalysed reaction is androst-5-ene-3,17-dione = androst-4-ene-3,17-dione. The protein operates within lipid metabolism; steroid biosynthesis. In terms of biological role, 3-beta-HSD is a bifunctional enzyme, that catalyzes the oxidative conversion of Delta(5)-ene-3-beta-hydroxy steroid, and the oxidative conversion of ketosteroids. The 3-beta-HSD enzymatic system plays a crucial role in the biosynthesis of all classes of hormonal steroids. This chain is 3 beta-hydroxysteroid dehydrogenase/Delta 5--&gt;4-isomerase type 2, found in Homo sapiens (Human).